Reading from the N-terminus, the 634-residue chain is MAEEQEFTQLCKLPVQPSHPHCVNNTYRSAQHSQALLRGLLALRDSGILFDVVLVVEGRHIEAHRILLAASCDYFRGMFAGGLKEMEQEEVLIHGVSYNAMCQILHFIYTSELELSLSNVQETLVAACQLQIPEIIHFCCDFLMSWVDEENILDVYRLAELFDLSRLTEQLDTYILKNFVAFSRTDKYRQLPLEKVYSLLSSNRLEVSCETEVYEGALLYHYTLEQVQADQISLHEPPKLLETVRFPLMEAEVLQRLHDKLDPSPLRDTVANALMYHRNESLQPSLQGPHTELRSDFQCVVGFGGIHSTPSTVLSDQAKYLNPLLGEWKHFTASLAPRMSNQGIAVLNNFVYLIGGDNNVQGFRAESRCWRYDPRHNRWFQIQSLQQEHADLCVCVVGRYIYAVAGRDYHNDLNAVERYDPTTNSWAYVAPLKREVYAHAGATLEGKMYVTCGRRGEDYLKETHCYDPDSNTWHSLADGPVRRAWHGMATLLDKLYVIGGSNNDAGYRRDVHQVACYSCTSGQWSSVCPLPAGHGEPGIAVLDTRIYVLGGRSHNRGSRTGYVHIYDVEKDCWEEGPQLDNSISGLAACVLTLPRTLLLEPPRGTPDRSQADPDFASEVMSVSDWEEFDNSSED.

At A2 the chain carries N-acetylalanine. The BTB domain maps to 50–117 (FDVVLVVEGR…IYTSELELSL (68 aa)). 6 Kelch repeats span residues 299–349 (CVVG…VLNN), 350–399 (FVYL…VVGR), 400–446 (YIYA…TLEG), 448–493 (MYVT…TLLD), 494–544 (KLYV…VLDT), and 545–593 (RIYV…VLTL). T463 bears the Phosphothreonine mark. A Phosphotyrosine modification is found at Y466. Residues 600–634 (EPPRGTPDRSQADPDFASEVMSVSDWEEFDNSSED) are disordered. T605 carries the phosphothreonine modification. Residues 624–634 (DWEEFDNSSED) show a composition bias toward acidic residues.

Component of the BCR(KLHL22) E3 ubiquitin ligase complex, at least composed of CUL3, KLHL22 and RBX1. Interacts with PLK1. Interacts with DEPDC5 (via DEP domain); the interaction depends on amino acid availability. Interacts with YWHAE; required for the nuclear localization of KLHL22 upon amino acid starvation.

The protein resides in the cytoplasm. Its subcellular location is the cytosol. The protein localises to the cytoskeleton. It localises to the microtubule organizing center. It is found in the centrosome. The protein resides in the spindle. Its subcellular location is the nucleus. The protein localises to the lysosome. Its pathway is protein modification; protein ubiquitination. Substrate-specific adapter of a BCR (BTB-CUL3-RBX1) E3 ubiquitin ligase complex required for chromosome alignment and localization of PLK1 at kinetochores. The BCR(KLHL22) ubiquitin ligase complex mediates monoubiquitination of PLK1, leading to PLK1 dissociation from phosphoreceptor proteins and subsequent removal from kinetochores, allowing silencing of the spindle assembly checkpoint (SAC) and chromosome segregation. Monoubiquitination of PLK1 does not lead to PLK1 degradation. The BCR(KLHL22) ubiquitin ligase complex is also responsible for the amino acid-stimulated 'Lys-48' polyubiquitination and proteasomal degradation of DEPDC5. Through the degradation of DEPDC5, releases the GATOR1 complex-mediated inhibition of the TORC1 pathway. It is therefore an amino acid-dependent activator within the amino acid-sensing branch of the TORC1 pathway, indirectly regulating different cellular processes including cell growth and autophagy. The sequence is that of Kelch-like protein 22 (KLHL22) from Ailuropoda melanoleuca (Giant panda).